Reading from the N-terminus, the 372-residue chain is tRNA-specific 2-thiouridylase MnmA (372 aa).

Residues 16–23 and M42 contribute to the ATP site; that span reads GMSGGVDS. The tract at residues 102–104 is interaction with target base in tRNA; the sequence is NPD. C107 acts as the Nucleophile in catalysis. An intrachain disulfide couples C107 to C205. ATP is bound at residue G132. The interval 155 to 157 is interaction with tRNA; that stretch reads KDQ. C205 functions as the Cysteine persulfide intermediate in the catalytic mechanism. Residues 317–318 form an interaction with tRNA region; the sequence is RY.

It belongs to the MnmA/TRMU family.

It localises to the cytoplasm. The catalysed reaction is S-sulfanyl-L-cysteinyl-[protein] + uridine(34) in tRNA + AH2 + ATP = 2-thiouridine(34) in tRNA + L-cysteinyl-[protein] + A + AMP + diphosphate + H(+). Its function is as follows. Catalyzes the 2-thiolation of uridine at the wobble position (U34) of tRNA, leading to the formation of s(2)U34. The protein is tRNA-specific 2-thiouridylase MnmA of Shewanella sp. (strain MR-7).